The chain runs to 261 residues: Carnitinyl-CoA dehydratase (261 aa).

Glu-111 functions as the Nucleophile in the catalytic mechanism. The Proton acceptor role is filled by Glu-131.

Belongs to the enoyl-CoA hydratase/isomerase family.

It carries out the reaction (R)-carnitinyl-CoA = crotonobetainyl-CoA + H2O. It functions in the pathway amine and polyamine metabolism; carnitine metabolism. Catalyzes the reversible dehydration of L-carnitinyl-CoA to crotonobetainyl-CoA. This is Carnitinyl-CoA dehydratase from Escherichia coli (strain SMS-3-5 / SECEC).